A 373-amino-acid polypeptide reads, in one-letter code: MTAQNPNLAALSAAGVSVWLDDLSRDRLRSGNLQELIDTKCVVGVTTNPSIFQKAFAEGHAYDSQIAELAARGADVDATIRTVTTDDVRNACDVLTREWENSDGVDGRVSIEVDPRLAGDTDKTIAQAVELWKIVDRPNLFIKIPATQAGLPAITAVLAEGISVNVTLIFSVERYRAVMDAYLAGMEKAREAGHDLSKIHSVASFFVSRVDTEIDKRLEKIGGERALALRGQAGVANARLAYAAYQEVFEGGQRYQALKADGARVQRPLWASTGVKNPDYSDTLYVTELVAPNTVNTMPEKTIDAVADHGVIRGDTVTGTGPDAQRVFDELAAVGVDLPDVFVVLENEGVEKFVDSWTELMEETQKQLGSASK.

The Schiff-base intermediate with substrate role is filled by K143.

This sequence belongs to the transaldolase family. Type 2 subfamily.

The protein localises to the cytoplasm. The catalysed reaction is D-sedoheptulose 7-phosphate + D-glyceraldehyde 3-phosphate = D-erythrose 4-phosphate + beta-D-fructose 6-phosphate. The protein operates within carbohydrate degradation; pentose phosphate pathway; D-glyceraldehyde 3-phosphate and beta-D-fructose 6-phosphate from D-ribose 5-phosphate and D-xylulose 5-phosphate (non-oxidative stage): step 2/3. Its function is as follows. Transaldolase is important for the balance of metabolites in the pentose-phosphate pathway. The chain is Transaldolase from Mycolicibacterium paratuberculosis (strain ATCC BAA-968 / K-10) (Mycobacterium paratuberculosis).